Here is a 212-residue protein sequence, read N- to C-terminus: Large ribosomal subunit protein uL1 (212 aa).

It belongs to the universal ribosomal protein uL1 family. In terms of assembly, part of the 50S ribosomal subunit.

Its function is as follows. Binds directly to 23S rRNA. Probably involved in E site tRNA release. Functionally, protein L1 is also a translational repressor protein, it controls the translation of its operon by binding to its mRNA. The polypeptide is Large ribosomal subunit protein uL1 (Methanosphaera stadtmanae (strain ATCC 43021 / DSM 3091 / JCM 11832 / MCB-3)).